Consider the following 431-residue polypeptide: Homeobox protein knotted-1-like 3 (431 aa).

The segment at 15 to 47 (NHFTDQHQPPPPQPPPPPPQQQQHFQEAPPPNW) is disordered. Residues 22–34 (QPPPPQPPPPPPQ) are compositionally biased toward pro residues. The ELK domain occupies 322–342 (ELKHELKQGYKEKIVDIREEI). The segment at residues 343–406 (LRKRRAGKLP…NQRKRNWHSN (64 aa)) is a DNA-binding region (homeobox; TALE-type). The interval 402-431 (NWHSNPSSSTVLKNKRKSNAGDNSGRERFA) is disordered. The span at 404–413 (HSNPSSSTVL) shows a compositional bias: polar residues.

The protein belongs to the TALE/KNOX homeobox family. As to quaternary structure, may form heterodimeric complex with the TALE/BELL proteins. Interacts with OFP1, OFP2, OFP4, OFP12 and OFP14. Interacts with KNATM-B.

Its subcellular location is the nucleus. This is Homeobox protein knotted-1-like 3 (KNAT3) from Arabidopsis thaliana (Mouse-ear cress).